The chain runs to 301 residues: uncharacterized protein (301 aa).

The first 26 residues, 1-26 (MKGFSCSRPGYLTGLLLLAVAPILTA), serve as a signal peptide directing secretion. Residue C27 is the site of N-palmitoyl cysteine attachment. C27 carries S-diacylglycerol cysteine lipidation. A TNase-like domain is found at 46-243 (KLKPATIEYW…YNAKINIWSH (198 aa)). Residues 64–136 (NYASEERRKE…SKGDSTGDEK (73 aa)) are disordered. Basic and acidic residues-rich tracts occupy residues 67-95 (SEER…KTED) and 120-136 (TPEK…GDEK).

The protein resides in the cell membrane. This is an uncharacterized protein from Mycoplasma pneumoniae (strain ATCC 29342 / M129 / Subtype 1) (Mycoplasmoides pneumoniae).